We begin with the raw amino-acid sequence, 33 residues long: Mu/delta-theraphotoxin-Pm2a (33 aa).

3 cysteine pairs are disulfide-bonded: Cys2–Cys16, Cys9–Cys21, and Cys15–Cys27. Phe33 carries the phenylalanine amide modification.

Expressed by the venom gland.

The protein localises to the secreted. Functionally, gating-modifier toxin with very weak activity on Nav1.7/SCN9A and Nav1.8/SCN10A. Shows 22% peak current inhibition (at 10 uM) on Nav1.8/SCN10A sodium channels. Show peak current inhibition and delays fast inactivation on Nav1.7/SCN9A (EC(50)&gt;10 uM). This chain is Mu/delta-theraphotoxin-Pm2a, found in Poecilotheria metallica (Metallic blue ornamental tree spider).